The sequence spans 199 residues: Fe/S biogenesis protein NfuA (199 aa).

[4Fe-4S] cluster is bound by residues cysteine 156 and cysteine 159.

This sequence belongs to the NfuA family. Homodimer. It depends on [4Fe-4S] cluster as a cofactor.

Involved in iron-sulfur cluster biogenesis. Binds a 4Fe-4S cluster, can transfer this cluster to apoproteins, and thereby intervenes in the maturation of Fe/S proteins. Could also act as a scaffold/chaperone for damaged Fe/S proteins. The polypeptide is Fe/S biogenesis protein NfuA (Haemophilus ducreyi (strain 35000HP / ATCC 700724)).